The chain runs to 188 residues: MSVKIRLQRHGKKGKPFYWVVAADARSKRDGKYLEKIGTYNPNTNPATVELNLDSAVKWLHNGAQPTDTARAILSYKGALLKHHLDGGVRKGALTQEQADAKLTAWLEAKAGKVDAKKDGLSKAQADAKAKALKAEKEVNDKRIAAAAKAEADAIAAASATEEAATEEVAEAAEEAPAAEENNETTEA.

Positions 155–188 (IAAASATEEAATEEVAEAAEEAPAAEENNETTEA) are disordered. A compositionally biased stretch (acidic residues) spans 164–188 (AATEEVAEAAEEAPAAEENNETTEA).

Belongs to the bacterial ribosomal protein bS16 family.

In Flavobacterium johnsoniae (strain ATCC 17061 / DSM 2064 / JCM 8514 / BCRC 14874 / CCUG 350202 / NBRC 14942 / NCIMB 11054 / UW101) (Cytophaga johnsonae), this protein is Small ribosomal subunit protein bS16.